Reading from the N-terminus, the 343-residue chain is HTH-type transcriptional regulator GntR (343 aa).

An HTH lacI-type domain is found at Pro-16–Ser-70. Residues Leu-18–Arg-37 constitute a DNA-binding region (H-T-H motif).

With respect to regulation, free GntR fails to recognize gluconate and 6-phosphogluconate, whereas the GntR/DNA complexes recognize both ligands. It is therefore likely that GntR DNA binding induces structural changes that permit GntR to recognize effectors. Involved in the regulation of glucose metabolism. Represses its own expression as well as that of the gluconate permease GntP. It employs an effector mediated de-repression mechanism: in the absence of ligand, GntR binds to the gntR and gntP promoters and represses their expression. The release of promoter bound GntR is induced by gluconate and 6-phosphogluconate that bind with similar apparent affinities to the GntR/DNA complex. The release of GntR leads to transcription of the genes. This Pseudomonas aeruginosa (strain ATCC 15692 / DSM 22644 / CIP 104116 / JCM 14847 / LMG 12228 / 1C / PRS 101 / PAO1) protein is HTH-type transcriptional regulator GntR.